Reading from the N-terminus, the 411-residue chain is ATP-dependent Clp protease ATP-binding subunit ClpX (411 aa).

Residues 1–49 form the ClpX-type ZB domain; the sequence is MSDKNIRCSFCGRTQKEVKKLIAGPGVYICDECVKLAYDIIEEEDSEEI. Zn(2+)-binding residues include cysteine 8, cysteine 11, cysteine 30, and cysteine 33. 115-122 contacts ATP; it reads PTGVGKTL.

The protein belongs to the ClpX chaperone family. Component of the ClpX-ClpP complex. Forms a hexameric ring that, in the presence of ATP, binds to fourteen ClpP subunits assembled into a disk-like structure with a central cavity, resembling the structure of eukaryotic proteasomes.

ATP-dependent specificity component of the Clp protease. It directs the protease to specific substrates. Can perform chaperone functions in the absence of ClpP. This Dictyoglomus turgidum (strain DSM 6724 / Z-1310) protein is ATP-dependent Clp protease ATP-binding subunit ClpX.